Reading from the N-terminus, the 577-residue chain is Beta-fructofuranosidase, insoluble isoenzyme 1 (577 aa).

Residues 1–22 (MGTRLLALAPWLLLLLLQLAGA) form the signal peptide. Residue D63 is part of the active site. Residues N158, N183, and N333 are each glycosylated (N-linked (GlcNAc...) asparagine).

It belongs to the glycosyl hydrolase 32 family. Expressed in roots, leaves and flowers. Weakly expressed in seeds.

Its subcellular location is the secreted. The protein localises to the extracellular space. The protein resides in the apoplast. It is found in the cell wall. The catalysed reaction is Hydrolysis of terminal non-reducing beta-D-fructofuranoside residues in beta-D-fructofuranosides.. May play a role in sucrose partitioning during seed development and in stress response. The polypeptide is Beta-fructofuranosidase, insoluble isoenzyme 1 (CIN1) (Oryza sativa subsp. japonica (Rice)).